Consider the following 752-residue polypeptide: Maltodextrin phosphorylase (752 aa).

At Lys-603 the chain carries N6-(pyridoxal phosphate)lysine.

It belongs to the glycogen phosphorylase family. Requires pyridoxal 5'-phosphate as cofactor.

It carries out the reaction [(1-&gt;4)-alpha-D-glucosyl](n) + phosphate = [(1-&gt;4)-alpha-D-glucosyl](n-1) + alpha-D-glucose 1-phosphate. Functionally, phosphorylase is an important allosteric enzyme in carbohydrate metabolism. Enzymes from different sources differ in their regulatory mechanisms and in their natural substrates. However, all known phosphorylases share catalytic and structural properties. This chain is Maltodextrin phosphorylase (malP), found in Streptococcus pneumoniae serotype 4 (strain ATCC BAA-334 / TIGR4).